We begin with the raw amino-acid sequence, 325 residues long: Olfactory receptor 6Y1 (325 aa).

Over 1-30 (MTTIILEVDNHTVTTRFILLGFPTRPAFQL) the chain is Extracellular. Residue Asn-10 is glycosylated (N-linked (GlcNAc...) asparagine). The chain crosses the membrane as a helical span at residues 31–51 (LFFSIFLATYLLTLLENLLII). The Cytoplasmic segment spans residues 52-59 (LAIHSDGQ). Residues 60–80 (LHKPMYFFLSHLSFLEMWYVT) form a helical membrane-spanning segment. The Extracellular portion of the chain corresponds to 81–104 (VISPKMLVDFLSHDKSISFNGCMT). A disulfide bridge links Cys-102 with Cys-194. Residues 105-125 (QLYFFVTFVCTEYILLAIMAF) traverse the membrane as a helical segment. Over 126-144 (DRYVAICNPLRYPVIMTNQ) the chain is Cytoplasmic. A helical transmembrane segment spans residues 145 to 165 (LCGTLAGGCWFCGLMTAMIKM). The Extracellular segment spans residues 166–202 (VFIAQLHYCGMPQINHYFCDISPLLNVSCEDASQAEM). The N-linked (GlcNAc...) asparagine glycan is linked to Asn-191. The helical transmembrane segment at 203–222 (VDFFLALMVIAIPLCVVVAS) threads the bilayer. Topologically, residues 223–242 (YAAILATILRIPSAQGRQKA) are cytoplasmic. A helical membrane pass occupies residues 243-263 (FSTCASHLTVVILFYSMTLFT). The Extracellular portion of the chain corresponds to 264–276 (YARPKLMYAYNSN). A helical membrane pass occupies residues 277 to 297 (KVVSVLYTVIVPLLNPIIYCL). Residues 298–325 (RNHEVKAALRKTIHCRGSGPQGNGAFSS) are Cytoplasmic-facing.

It belongs to the G-protein coupled receptor 1 family.

It is found in the cell membrane. In terms of biological role, odorant receptor. In Homo sapiens (Human), this protein is Olfactory receptor 6Y1 (OR6Y1).